The sequence spans 196 residues: MTSEAMDTLGQYKITVWEEESFQGKRCEFLMECPSIMERGFRKIRSIKVESGPWVGFEYPEYQGQQFILEKGDYPRWEAWSGNSGYRTEHLLSFRPVKCANHNDSKAILYEAENFQGHKFELSDDYPSLQAMGWGNKEVASIKVNAGAWVAYQYPGYRGYQYVLERDRQNGEFKKYSEYSSQAHTNQIQSIRRIQH.

The segment at 1-11 is N-terminal arm; it reads MTSEAMDTLGQ. 2 Beta/gamma crystallin 'Greek key' domains span residues 12-51 and 52-98; these read YKIT…KVES and GPWV…RPVK. The connecting peptide stretch occupies residues 99–104; it reads CANHND. 2 consecutive Beta/gamma crystallin 'Greek key' domains span residues 105–146 and 147–195; these read SKAI…KVNA and GAWV…RRIQ.

The protein belongs to the beta/gamma-crystallin family. Homo/heterodimer, or complexes of higher-order. The structure of beta-crystallin oligomers seems to be stabilized through interactions between the N-terminal arms.

In terms of biological role, crystallins are the dominant structural components of the vertebrate eye lens. This chain is Beta-crystallin A2 (CRYBA2), found in Gallus gallus (Chicken).